A 308-amino-acid polypeptide reads, in one-letter code: uncharacterized protein (308 aa).

An N-terminal signal peptide occupies residues 1–19 (MKLLLILILIINNYNLCLS). Asn25 and Asn300 each carry an N-linked (GlcNAc...) asparagine glycan.

The protein resides in the secreted. This is an uncharacterized protein from Dictyostelium discoideum (Social amoeba).